The chain runs to 419 residues: AT-hook motif nuclear-localized protein 4 (419 aa).

3 disordered regions span residues 1–168 (MEER…SGGG), 301–337 (QQQQ…DPKA), and 382–419 (DLFS…EVPS). The short motif at 78–86 (KKKRGRPRK) is the Bipartite nuclear localization signal element. Residues 78–90 (KKKRGRPRKYNPD) constitute a DNA-binding region (a.T hook). The span at 101-112 (PISSSVPLTSEF) shows a compositional bias: polar residues. Residues 115–130 (RKRGRGRGRGRGRGRG) are compositionally biased toward basic residues. Over residues 136–148 (GSREPNNNNNDNN) the composition is skewed to low complexity. One can recognise a PPC domain in the interval 174-314 (VSPSFTPHVL…QQIKKQRRER (141 aa)). Polar residues predominate over residues 318-328 (PTTTQASNISF). Positions 391–406 (DREEDEDDLEGEDDEE) are enriched in acidic residues.

As to quaternary structure, homodimer. Interacts with AHL3. As to expression, predominantly expressed in the stele of the root meristem with a specificity to the procambium.

It localises to the nucleus. In terms of biological role, transcription factor that specifically binds AT-rich DNA sequences related to the nuclear matrix attachment regions (MARs). Acts redundantly with AHL3 to regulate the formation of tissue boundary between the xylem and procambium in the root meristem. Cell-to-cell movement of AHL4 from the procambium to the xylem is critical for its function in root vascular patterning. The protein is AT-hook motif nuclear-localized protein 4 of Arabidopsis thaliana (Mouse-ear cress).